The sequence spans 346 residues: Nitrilase 1 (346 aa).

Ser2 carries the N-acetylserine modification. Residues 25–297 (VRVTIVQSST…EGLVTADIDL (273 aa)) enclose the CN hydrolase domain. Glu65 acts as the Proton acceptor in catalysis. Residue Lys152 is the Proton donor of the active site. The active-site Nucleophile is Cys186.

This sequence belongs to the carbon-nitrogen hydrolase superfamily. Nitrilase family. As to quaternary structure, interacts with DEK3. As to expression, expressed in cotyledons, hypocotyls, leaves, roots, stems, flowers and siliques.

It catalyses the reaction a nitrile + 2 H2O = a carboxylate + NH4(+). In terms of biological role, can convert indole-3-acetonitrile to the plant hormone indole-3-acetic acid. This chain is Nitrilase 1, found in Arabidopsis thaliana (Mouse-ear cress).